The primary structure comprises 432 residues: Glutamate-1-semialdehyde 2,1-aminomutase (432 aa).

Position 265 is an N6-(pyridoxal phosphate)lysine (Lys265).

Belongs to the class-III pyridoxal-phosphate-dependent aminotransferase family. HemL subfamily. In terms of assembly, homodimer. Pyridoxal 5'-phosphate is required as a cofactor.

The protein resides in the cytoplasm. The catalysed reaction is (S)-4-amino-5-oxopentanoate = 5-aminolevulinate. It functions in the pathway porphyrin-containing compound metabolism; protoporphyrin-IX biosynthesis; 5-aminolevulinate from L-glutamyl-tRNA(Glu): step 2/2. The sequence is that of Glutamate-1-semialdehyde 2,1-aminomutase from Histophilus somni (strain 129Pt) (Haemophilus somnus).